The primary structure comprises 377 residues: Adaptive-response sensory kinase SasA (377 aa).

Residues 154–373 form the Histidine kinase domain; that stretch reads MLVHDLRSPL…SFHFTLPVYR (220 aa). Position 157 is a phosphohistidine; by autocatalysis (His157).

In terms of assembly, homooligomerizes. Interacts with KaiC. Participates in the KaiABC clock complex, whose core is composed of a KaiC homohexamer, 6 KaiB and up to 6 KaiA dimers. SasA and KaiB(fs) compete to bind to KaiC.

The enzyme catalyses ATP + protein L-histidine = ADP + protein N-phospho-L-histidine.. Its function is as follows. Member of the two-component regulatory system SasA/RpaA involved in genome-wide circadian gene expression. One of several clock output pathways. Participates in the Kai clock protein complex, the main circadian regulator in cyanobacteria, via its interaction with KaiC. KaiC enhances the autophosphorylation activity of SasA, which then transfers its phosphate group to RpaA to activate it. In addition to its output function, recruits fold-shifted KaiB (KaiB(fs)) to KaiC to cooperatively form the KaiB(6):KaiC(6) complex (independent of SasA kinase activity). Required for robustness of the circadian rhythm of gene expression and is involved in clock output, also required for adaptation to light/dark cycles. This Synechococcus sp. (strain JA-3-3Ab) (Cyanobacteria bacterium Yellowstone A-Prime) protein is Adaptive-response sensory kinase SasA.